The chain runs to 480 residues: Ribulose bisphosphate carboxylase large chain (480 aa).

Positions 1 to 2 are excised as a propeptide; that stretch reads MS. Residue P3 is modified to N-acetylproline. N6,N6,N6-trimethyllysine is present on K14. N123 and T173 together coordinate substrate. K175 serves as the catalytic Proton acceptor. Substrate is bound at residue K177. K201, D203, and E204 together coordinate Mg(2+). The residue at position 201 (K201) is an N6-carboxylysine. The Proton acceptor role is filled by H294. 3 residues coordinate substrate: R295, H327, and S379.

Belongs to the RuBisCO large chain family. Type I subfamily. Heterohexadecamer of 8 large chains and 8 small chains; disulfide-linked. The disulfide link is formed within the large subunit homodimers. Requires Mg(2+) as cofactor. The disulfide bond which can form in the large chain dimeric partners within the hexadecamer appears to be associated with oxidative stress and protein turnover.

It localises to the plastid. The protein localises to the chloroplast. The enzyme catalyses 2 (2R)-3-phosphoglycerate + 2 H(+) = D-ribulose 1,5-bisphosphate + CO2 + H2O. It carries out the reaction D-ribulose 1,5-bisphosphate + O2 = 2-phosphoglycolate + (2R)-3-phosphoglycerate + 2 H(+). RuBisCO catalyzes two reactions: the carboxylation of D-ribulose 1,5-bisphosphate, the primary event in carbon dioxide fixation, as well as the oxidative fragmentation of the pentose substrate in the photorespiration process. Both reactions occur simultaneously and in competition at the same active site. The polypeptide is Ribulose bisphosphate carboxylase large chain (Alluaudia procera (Madagascan ocotillo)).